Here is a 50-residue protein sequence, read N- to C-terminus: Large ribosomal subunit protein bL33 (50 aa).

This sequence belongs to the bacterial ribosomal protein bL33 family.

In Sulfurimonas denitrificans (strain ATCC 33889 / DSM 1251) (Thiomicrospira denitrificans (strain ATCC 33889 / DSM 1251)), this protein is Large ribosomal subunit protein bL33.